The following is a 34-amino-acid chain: Cytochrome c oxidase subunit 6B (34 aa).

This sequence belongs to the cytochrome c oxidase subunit 6B family. As to quaternary structure, component of the cytochrome c oxidase (complex IV, CIV), a multisubunit enzyme composed of 14 subunits. The complex is composed of a catalytic core of 3 subunits MT-CO1, MT-CO2 and MT-CO3, encoded in the mitochondrial DNA, and 11 supernumerary subunits COX4I, COX5A, COX5B, COX6A, COX6B, COX6C, COX7A, COX7B, COX7C, COX8 and NDUFA4, which are encoded in the nuclear genome. The complex exists as a monomer or a dimer and forms supercomplexes (SCs) in the inner mitochondrial membrane with NADH-ubiquinone oxidoreductase (complex I, CI) and ubiquinol-cytochrome c oxidoreductase (cytochrome b-c1 complex, complex III, CIII), resulting in different assemblies (supercomplex SCI(1)III(2)IV(1) and megacomplex MCI(2)III(2)IV(2)). The N-terminus is blocked.

Its subcellular location is the mitochondrion inner membrane. The protein operates within energy metabolism; oxidative phosphorylation. In terms of biological role, component of the cytochrome c oxidase, the last enzyme in the mitochondrial electron transport chain which drives oxidative phosphorylation. The respiratory chain contains 3 multisubunit complexes succinate dehydrogenase (complex II, CII), ubiquinol-cytochrome c oxidoreductase (cytochrome b-c1 complex, complex III, CIII) and cytochrome c oxidase (complex IV, CIV), that cooperate to transfer electrons derived from NADH and succinate to molecular oxygen, creating an electrochemical gradient over the inner membrane that drives transmembrane transport and the ATP synthase. Cytochrome c oxidase is the component of the respiratory chain that catalyzes the reduction of oxygen to water. Electrons originating from reduced cytochrome c in the intermembrane space (IMS) are transferred via the dinuclear copper A center (CU(A)) of subunit 2 and heme A of subunit 1 to the active site in subunit 1, a binuclear center (BNC) formed by heme A3 and copper B (CU(B)). The BNC reduces molecular oxygen to 2 water molecules using 4 electrons from cytochrome c in the IMS and 4 protons from the mitochondrial matrix. This Thunnus obesus (Bigeye tuna) protein is Cytochrome c oxidase subunit 6B.